A 262-amino-acid chain; its full sequence is 2-oxo-tetronate isomerase (262 aa).

E143 (proton donor/acceptor) is an active-site residue. Residues E143, D178, Q204, and E240 each contribute to the Mg(2+) site. The active-site Proton donor/acceptor is the E240.

Belongs to the hyi family. OtnI subfamily.

The enzyme catalyses 2-dehydro-L-erythronate = 3-dehydro-L-erythronate. It catalyses the reaction 2-dehydro-D-erythronate = 3-dehydro-D-erythronate. Its function is as follows. Catalyzes the isomerization of 2-oxo-tetronate to 3-oxo-tetronate. The chain is 2-oxo-tetronate isomerase from Pectobacterium atrosepticum (strain SCRI 1043 / ATCC BAA-672) (Erwinia carotovora subsp. atroseptica).